Consider the following 258-residue polypeptide: UDP-N-acetylenolpyruvoylglucosamine reductase (258 aa).

The active site involves arginine 142. The active-site Proton donor is serine 184. Glutamate 254 is a catalytic residue.

The protein belongs to the MurB family. FAD is required as a cofactor.

It localises to the cytoplasm. It carries out the reaction UDP-N-acetyl-alpha-D-muramate + NADP(+) = UDP-N-acetyl-3-O-(1-carboxyvinyl)-alpha-D-glucosamine + NADPH + H(+). The protein operates within cell wall biogenesis; peptidoglycan biosynthesis. Cell wall formation. This Campylobacter jejuni subsp. jejuni serotype O:2 (strain ATCC 700819 / NCTC 11168) protein is UDP-N-acetylenolpyruvoylglucosamine reductase.